We begin with the raw amino-acid sequence, 1143 residues long: Exportin-T (1143 aa).

A disordered region spans residues 566-593 (ARNKLRAAQGSGRTTPSSSDNVDLGPSS). Residues 576–593 (SGRTTPSSSDNVDLGPSS) are compositionally biased toward polar residues.

Belongs to the exportin family.

It is found in the nucleus. It localises to the cytoplasm. Functionally, tRNA nucleus export receptor which facilitates tRNA translocation across the nuclear pore complex. Involved in pre-tRNA splicing, probably by affecting the interaction of pre-tRNA with splicing endonuclease. The sequence is that of Exportin-T (LOS1) from Cryptococcus neoformans var. neoformans serotype D (strain JEC21 / ATCC MYA-565) (Filobasidiella neoformans).